The primary structure comprises 286 residues: L-cysteine S-thiosulfotransferase subunit SoxA (286 aa).

A signal peptide spans 1–28 (MKKTIQRGLFTGALVLLTAMTSKPAHAA). Cys-106 and Cys-137 are joined by a disulfide. Positions 180 to 286 (DAYMKGKEMF…LKFNGPASRK (107 aa)) constitute a Cytochrome c domain. Residues Cys-200 and His-204 each coordinate heme. Arg-243 is a binding site for substrate. Residue Cys-247 participates in heme binding. Cys-247 (cysteine persulfide intermediate) is an active-site residue.

This sequence belongs to the SoxA family. As to quaternary structure, heterodimer of SoxA and SoxX. The SoxAX complex interacts with CT1020, SoxAX-binding protein SaxB (SoxK); this interaction stimulates catalytic activity of the complex. It depends on heme as a cofactor. Post-translationally, cysteine persulfide at Cys-247.

The protein resides in the periplasm. It catalyses the reaction L-cysteinyl-[SoxY protein] + thiosulfate + 2 Fe(III)-[cytochrome c] = S-sulfosulfanyl-L-cysteinyl-[SoxY protein] + 2 Fe(II)-[cytochrome c] + 2 H(+). It carries out the reaction S-sulfanyl-L-cysteinyl-[SoxY protein] + thiosulfate + 2 Fe(III)-[cytochrome c] = S-(2-sulfodisulfanyl)-L-cysteinyl-[SoxY protein] + 2 Fe(II)-[cytochrome c] + 2 H(+). Its function is as follows. C-type monoheme cytochrome, which is part of the SoxAX cytochrome complex involved in sulfur oxidation. The SoxAX complex catalyzes the formation of a heterodisulfide bond between the conserved cysteine residue on a sulfur carrier SoxYZ complex subunit SoxY and thiosulfate or other inorganic sulfur substrates. This leads to the liberation of two electrons, which may be transferred from the SoxAX complex to another cytochrome c and which then may be used for reductive CO(2) fixation. This is L-cysteine S-thiosulfotransferase subunit SoxA from Chlorobaculum thiosulfatiphilum (Chlorobium limicola f.sp. thiosulfatophilum).